The following is a 98-amino-acid chain: NADH-ubiquinone oxidoreductase chain 4L (98 aa).

3 consecutive transmembrane segments (helical) span residues 1–21 (MPSI…GTLI), 26–46 (LMSS…LTSL), and 61–81 (IILL…LVMV).

It belongs to the complex I subunit 4L family. In terms of assembly, core subunit of respiratory chain NADH dehydrogenase (Complex I) which is composed of 45 different subunits.

It localises to the mitochondrion inner membrane. It carries out the reaction a ubiquinone + NADH + 5 H(+)(in) = a ubiquinol + NAD(+) + 4 H(+)(out). Its function is as follows. Core subunit of the mitochondrial membrane respiratory chain NADH dehydrogenase (Complex I) which catalyzes electron transfer from NADH through the respiratory chain, using ubiquinone as an electron acceptor. Part of the enzyme membrane arm which is embedded in the lipid bilayer and involved in proton translocation. This Otolemur crassicaudatus (Brown greater galago) protein is NADH-ubiquinone oxidoreductase chain 4L (MT-ND4L).